The sequence spans 281 residues: Stomatin-4 (281 aa).

The helical transmembrane segment at 28–48 threads the bilayer; sequence WIITIISYLVVLFTLPLSAFF.

This sequence belongs to the band 7/mec-2 family.

Its subcellular location is the membrane. This Caenorhabditis elegans protein is Stomatin-4 (sto-4).